Consider the following 412-residue polypeptide: Tyrosine--tRNA ligase (412 aa).

Tyr31 serves as a coordination point for L-tyrosine. A 'HIGH' region motif is present at residues 36–45 (PTAASLHIGH). L-tyrosine-binding residues include Tyr162 and Gln166. The 'KMSKS' region motif lies at 222–226 (KIGKT). Lys225 lines the ATP pocket. Positions 345 to 412 (KRWIDLFVGV…KKKKLVLHLI (68 aa)) constitute an S4 RNA-binding domain.

It belongs to the class-I aminoacyl-tRNA synthetase family. TyrS type 1 subfamily. In terms of assembly, homodimer.

The protein resides in the cytoplasm. It carries out the reaction tRNA(Tyr) + L-tyrosine + ATP = L-tyrosyl-tRNA(Tyr) + AMP + diphosphate + H(+). Functionally, catalyzes the attachment of tyrosine to tRNA(Tyr) in a two-step reaction: tyrosine is first activated by ATP to form Tyr-AMP and then transferred to the acceptor end of tRNA(Tyr). This is Tyrosine--tRNA ligase from Chlamydia caviae (strain ATCC VR-813 / DSM 19441 / 03DC25 / GPIC) (Chlamydophila caviae).